Reading from the N-terminus, the 364-residue chain is Bifunctional protein Rv2228c (364 aa).

Positions 1-139 (MKVVIEADGG…MDAAAQSAAA (139 aa)) constitute an RNase H type-1 domain. Residues aspartate 8, glutamate 49, aspartate 73, and aspartate 123 each contribute to the Mg(2+) site. The active-site Tele-phosphohistidine intermediate is the histidine 172. Glutamate 246 (proton donor/acceptor; for phosphatase activity) is an active-site residue.

It in the N-terminal section; belongs to the RNase H family. This sequence in the C-terminal section; belongs to the histidine phosphatase superfamily. As to quaternary structure, the N-terminal domain alone is monomeric in solution but associates in the crystal to form a dimer. Mg(2+) serves as cofactor.

The enzyme catalyses Endonucleolytic cleavage to 5'-phosphomonoester.. It carries out the reaction adenosylcob(III)alamin 5'-phosphate + H2O = adenosylcob(III)alamin + phosphate. The catalysed reaction is alpha-ribazole 5'-phosphate + H2O = alpha-ribazole + phosphate. Its pathway is nucleoside biosynthesis; alpha-ribazole biosynthesis; alpha-ribazole from 5,6-dimethylbenzimidazole: step 2/2. In terms of biological role, endonuclease that displays both RNase H activity with a hybrid RNA/DNA substrate as well as double-stranded RNase activity. As the only authenticated RNase HI in M.tuberculosis, probably plays an important role in the physiology of this organism, being likely involved in bacterial replication. Its function is as follows. Catalyzes the hydrolysis of the phospho group from alpha-ribazole 5'-phosphate to form alpha-ribazole. May also catalyze the conversion of adenosylcobalamin 5'-phosphate to adenosylcobalamin (vitamin B12). Has a possible role in B12 recycling, but the primary role of the C-terminal domain of this phosphatase enzyme could be phosphate generation to help bacterial survival within the macrophage, which is a phosphate-deprived environment. This Mycobacterium tuberculosis (strain ATCC 25618 / H37Rv) protein is Bifunctional protein Rv2228c.